Reading from the N-terminus, the 548-residue chain is (2S)-methylsuccinyl-CoA dehydrogenase (548 aa).

Residues 282–291 and 315–317 each bind FAD; these read AVFTEPNTGS and WIT. Residue Ser291 participates in substrate binding. Residue 409–412 participates in substrate binding; it reads ESAR. FAD contacts are provided by residues Arg437 and 505 to 509; that span reads QIHGG. Glu532 (proton acceptor) is an active-site residue. FAD is bound at residue 534–536; it reads AAE.

It belongs to the acyl-CoA dehydrogenase family. As to quaternary structure, homodimer. FAD is required as a cofactor.

The enzyme catalyses (2S)-methylsuccinyl-CoA + oxidized [electron-transfer flavoprotein] + H(+) = 2-methylfumaryl-CoA + reduced [electron-transfer flavoprotein]. In terms of biological role, involved in the ethylmalonyl-CoA pathway, a new acetyl-CoA assimilation strategy that operates in a number of bacteria and replaces the glyoxylate cycle. Catalyzes the oxidation of (2S)-methylsuccinyl-CoA to yield mesaconyl-(C1)-CoA. Highly specific for (S)-methylsuccinyl-CoA. In Cereibacter sphaeroides (Rhodobacter sphaeroides), this protein is (2S)-methylsuccinyl-CoA dehydrogenase.